The primary structure comprises 589 residues: Probable methyltransferase PMT23 (589 aa).

The Cytoplasmic segment spans residues M1–S4. The chain crosses the membrane as a helical; Signal-anchor for type II membrane protein span at residues V5–F25. Residues T26–R589 lie on the Lumenal side of the membrane. N-linked (GlcNAc...) asparagine glycosylation is found at N70, N375, and N442.

This sequence belongs to the methyltransferase superfamily.

The protein resides in the golgi apparatus membrane. This Arabidopsis thaliana (Mouse-ear cress) protein is Probable methyltransferase PMT23.